The primary structure comprises 24 residues: Cryptonin (24 aa).

In terms of biological role, antimicrobial peptide, active against the Gram-negative bacterium E.coli K12-594 (MIC=3.12 ug/ml), the Gram-positive bacteria B.subtilis KCTC 3086 (MIC=3.12 ug/ml), S.aureus KCTC 1928 (MIC=25 ug/ml) and M.luteus KCTC 3063 (MIC=1.56 ug/ml), the antibiotic resistant bacteria methicillin-resistant S.aureus (MRSA) (MIC=25 ug/ml) and vancomycin-resistant Enterococci (VRE) (MIC=25 ug/ml), and the fungi C.albicans KCTC 7965 (MIC=50 ug/ml) and C.tropicalis KCTC 1925 (MIC=3.12 ug/ml). Has very low hemolytic activity on rat erythrocytes. This Cryptotympana dubia (Korean horse cicada) protein is Cryptonin.